Reading from the N-terminus, the 279-residue chain is Diaminopimelate epimerase (279 aa).

Residues N11 and N72 each coordinate substrate. C81 (proton donor) is an active-site residue. Residues 82–83 (GN), N187, and 205–206 (ER) contribute to the substrate site. C215 (proton acceptor) is an active-site residue. Residue 216–217 (GT) participates in substrate binding.

Belongs to the diaminopimelate epimerase family. Homodimer.

It localises to the cytoplasm. It catalyses the reaction (2S,6S)-2,6-diaminopimelate = meso-2,6-diaminopimelate. The protein operates within amino-acid biosynthesis; L-lysine biosynthesis via DAP pathway; DL-2,6-diaminopimelate from LL-2,6-diaminopimelate: step 1/1. Its function is as follows. Catalyzes the stereoinversion of LL-2,6-diaminopimelate (L,L-DAP) to meso-diaminopimelate (meso-DAP), a precursor of L-lysine and an essential component of the bacterial peptidoglycan. This is Diaminopimelate epimerase from Aquifex aeolicus (strain VF5).